A 391-amino-acid chain; its full sequence is F-box/kelch-repeat protein At4g05080 (391 aa).

One can recognise an F-box domain in the interval 2–49 (TMMFDLTQDLVKEILSRVPITSLGAVRSTCKGWNALSKDRILCKAKPK). Kelch repeat units follow at residues 100 to 143 (HMYY…TFCL) and 144 to 194 (RYDN…SASV). The span at 369–385 (RRRRERNSKRKEKKRKG) shows a compositional bias: basic residues. Residues 369 to 391 (RRRRERNSKRKEKKRKGTTNNKV) form a disordered region.

This chain is F-box/kelch-repeat protein At4g05080, found in Arabidopsis thaliana (Mouse-ear cress).